The sequence spans 263 residues: Probable cyclic nucleotide phosphodiesterase CPS_4178 (263 aa).

Fe cation contacts are provided by Asp21, His23, Asp62, Asn94, His160, His198, and His200. Residues His23, Asp62, and 94 to 95 (NH) each bind AMP. AMP is bound at residue His200.

The protein belongs to the cyclic nucleotide phosphodiesterase class-III family. The cofactor is Fe(2+).

The sequence is that of Probable cyclic nucleotide phosphodiesterase CPS_4178 from Colwellia psychrerythraea (strain 34H / ATCC BAA-681) (Vibrio psychroerythus).